The sequence spans 199 residues: Hematopoietic prostaglandin D synthase (199 aa).

Residues 2–79 form the GST N-terminal domain; that stretch reads PNYKLLYFNM…YLTKNTDLAG (78 aa). Residues Tyr8, Arg14, Trp39, 49 to 51, and 63 to 64 contribute to the glutathione site; these read GKI and QS. One can recognise a GST C-terminal domain in the interval 81–199; that stretch reads TALEQCQADA…WILKRPQTKL (119 aa).

Belongs to the GST superfamily. Sigma family. Homodimer. Requires glutathione as cofactor. In terms of tissue distribution, expressed in skin and oviduct.

The protein resides in the cytoplasm. It catalyses the reaction prostaglandin H2 = prostaglandin D2. The enzyme catalyses RX + glutathione = an S-substituted glutathione + a halide anion + H(+). The catalysed reaction is 2-glyceryl-prostaglandin H2 = 2-glyceryl-prostaglandin D2. In terms of biological role, bifunctional enzyme which catalyzes both the conversion of PGH2 to PGD2, a prostaglandin involved in smooth muscle contraction/relaxation and a potent inhibitor of platelet aggregation, and the conjugation of glutathione with a wide range of aryl halides and organic isothiocyanates. Also exhibits low glutathione-peroxidase activity. The polypeptide is Hematopoietic prostaglandin D synthase (Mus musculus (Mouse)).